We begin with the raw amino-acid sequence, 1002 residues long: Lon protease homolog, mitochondrial (1002 aa).

The Lon N-terminal domain occupies 102–313 (VIALPLPHRP…LTLELVKKEM (212 aa)). Residue 468–475 (GPPGVGKT) participates in ATP binding. Residues 811–995 (QTPVGVVMGL…NEIFDIAFQS (185 aa)) enclose the Lon proteolytic domain. Active-site residues include S901 and K944.

Belongs to the peptidase S16 family. In terms of assembly, homohexamer or homoheptamer. Organized in a ring with a central cavity.

The protein localises to the mitochondrion matrix. The catalysed reaction is Hydrolysis of proteins in presence of ATP.. ATP-dependent serine protease that mediates the selective degradation of misfolded, unassembled or oxidatively damaged polypeptides as well as certain short-lived regulatory proteins in the mitochondrial matrix. May also have a chaperone function in the assembly of inner membrane protein complexes. Participates in the regulation of mitochondrial gene expression and in the maintenance of the integrity of the mitochondrial genome. Binds to mitochondrial DNA in a site-specific manner. In Oryza sativa subsp. japonica (Rice), this protein is Lon protease homolog, mitochondrial.